The following is a 456-amino-acid chain: Chromosomal replication initiator protein DnaA (456 aa).

Residues 1–83 (MKLKILHFTS…DAFEEESNNG (83 aa)) are domain I, interacts with DnaA modulators. A domain II region spans residues 83–116 (GVRPEIHIKVKEKKENVKSLKNNKSMLYFNTNGL). Residues 117-331 (SLNPFYTFEN…GILSTINAHI (215 aa)) form a domain III, AAA+ region region. G161, G163, K164, and T165 together coordinate ATP. Residues 332-456 (NLSPESSSLK…SKIQQSLDSV (125 aa)) are domain IV, binds dsDNA.

It belongs to the DnaA family. Oligomerizes as a right-handed, spiral filament on DNA at oriC.

It is found in the cytoplasm. Functionally, plays an essential role in the initiation and regulation of chromosomal replication. ATP-DnaA binds to the origin of replication (oriC) to initiate formation of the DNA replication initiation complex once per cell cycle. Binds the DnaA box (a 9 base pair repeat at the origin) and separates the double-stranded (ds)DNA. Forms a right-handed helical filament on oriC DNA; dsDNA binds to the exterior of the filament while single-stranded (ss)DNA is stabiized in the filament's interior. The ATP-DnaA-oriC complex binds and stabilizes one strand of the AT-rich DNA unwinding element (DUE), permitting loading of DNA polymerase. After initiation quickly degrades to an ADP-DnaA complex that is not apt for DNA replication. Binds acidic phospholipids. This chain is Chromosomal replication initiator protein DnaA, found in Helicobacter hepaticus (strain ATCC 51449 / 3B1).